Reading from the N-terminus, the 458-residue chain is ATP synthase subunit beta (458 aa).

Gly-148–Thr-155 contacts ATP.

The protein belongs to the ATPase alpha/beta chains family. F-type ATPases have 2 components, CF(1) - the catalytic core - and CF(0) - the membrane proton channel. CF(1) has five subunits: alpha(3), beta(3), gamma(1), delta(1), epsilon(1). CF(0) has three main subunits: a(1), b(2) and c(9-12). The alpha and beta chains form an alternating ring which encloses part of the gamma chain. CF(1) is attached to CF(0) by a central stalk formed by the gamma and epsilon chains, while a peripheral stalk is formed by the delta and b chains.

It localises to the cell inner membrane. The catalysed reaction is ATP + H2O + 4 H(+)(in) = ADP + phosphate + 5 H(+)(out). Its function is as follows. Produces ATP from ADP in the presence of a proton gradient across the membrane. The catalytic sites are hosted primarily by the beta subunits. The chain is ATP synthase subunit beta from Pseudomonas fluorescens (strain Pf0-1).